The following is a 251-amino-acid chain: SPbeta prophage-derived putative antirepressor protein YoqD (251 aa).

The polypeptide is SPbeta prophage-derived putative antirepressor protein YoqD (yoqD) (Bacillus subtilis (strain 168)).